The sequence spans 553 residues: CTP synthase (553 aa).

Residues 1 to 266 (MKYIFVTGGV…GKAVEDLLGL (266 aa)) are amidoligase domain. Ser-12 lines the CTP pocket. Residue Ser-12 participates in UTP binding. An ATP-binding site is contributed by 13–18 (SLGKGV). Tyr-53 serves as a coordination point for L-glutamine. Residue Asp-70 participates in ATP binding. Residues Asp-70 and Glu-140 each coordinate Mg(2+). CTP is bound by residues 147–149 (DIE), 187–192 (KTKPTQ), and Lys-223. Residues 187–192 (KTKPTQ) and Lys-223 contribute to the UTP site. Residues 291-541 (TIAIAGKYTE…VAAALQSGPS (251 aa)) enclose the Glutamine amidotransferase type-1 domain. Residue Gly-353 participates in L-glutamine binding. Catalysis depends on Cys-380, which acts as the Nucleophile; for glutamine hydrolysis. Residues 381–384 (LGMQ), Glu-404, and Arg-464 each bind L-glutamine. Catalysis depends on residues His-514 and Glu-516.

It belongs to the CTP synthase family. As to quaternary structure, homotetramer.

It carries out the reaction UTP + L-glutamine + ATP + H2O = CTP + L-glutamate + ADP + phosphate + 2 H(+). It catalyses the reaction L-glutamine + H2O = L-glutamate + NH4(+). The enzyme catalyses UTP + NH4(+) + ATP = CTP + ADP + phosphate + 2 H(+). Its pathway is pyrimidine metabolism; CTP biosynthesis via de novo pathway; CTP from UDP: step 2/2. Allosterically activated by GTP, when glutamine is the substrate; GTP has no effect on the reaction when ammonia is the substrate. The allosteric effector GTP functions by stabilizing the protein conformation that binds the tetrahedral intermediate(s) formed during glutamine hydrolysis. Inhibited by the product CTP, via allosteric rather than competitive inhibition. In terms of biological role, catalyzes the ATP-dependent amination of UTP to CTP with either L-glutamine or ammonia as the source of nitrogen. Regulates intracellular CTP levels through interactions with the four ribonucleotide triphosphates. In Deinococcus geothermalis (strain DSM 11300 / CIP 105573 / AG-3a), this protein is CTP synthase.